Here is a 60-residue protein sequence, read N- to C-terminus: MVSGKRIADVGYRLFSGSMMLLTVYGGYLCVVRAQRYMQRKKQLELAAQSENTASEIIKE.

The helical transmembrane segment at 10-32 threads the bilayer; it reads VGYRLFSGSMMLLTVYGGYLCVV.

It localises to the mitochondrion membrane. Plays a role in the assembly or stability of the cytochrome c oxidase complex (COX). This chain is Cytochrome c oxidase assembly protein COX14 homolog, found in Danio rerio (Zebrafish).